The sequence spans 394 residues: MILGSTGSIGTQAIDLVLRNPDRFRVTGLSAAGGRVGLLAEQAHRLRVSTVAVAREDVVPVLREALTAQYGPGEPLPEILAGADAATQLAASDCHTVLNGITGSIGLAPTLAALEAGRTLALANKESLIVGGPLVKALAKPGQIIPVDSEHAALFQALAAGTRADVRKLVVTASGGPFRGRTKAELANVSPEHALAHPTWAMGPVITINSATLVNKGLEVIEAHLLYDIPFERIEVVVHPQSYVHSMVEFTDGSTLAQATPPDMRGPIAIGLGWPERVPDAAPAFDWTKASSWEFFPLDNDAFPSVGLARHVGQLAGTAPAVFNAANEECVDAFLNGTLPFNGIMETVTRVVEEHGTPRTGTSLTVADVLEAETWARARARELTVQTATAEARA.

Positions 6, 7, 8, 9, 32, and 124 each coordinate NADPH. K125 is a 1-deoxy-D-xylulose 5-phosphate binding site. NADPH is bound at residue E126. Mn(2+) is bound at residue D148. Positions 149, 150, 174, and 197 each coordinate 1-deoxy-D-xylulose 5-phosphate. Residue E150 coordinates Mn(2+). Residue G203 participates in NADPH binding. 1-deoxy-D-xylulose 5-phosphate is bound by residues S210, N215, K216, and E219. E219 lines the Mn(2+) pocket.

The protein belongs to the DXR family. Mg(2+) serves as cofactor. It depends on Mn(2+) as a cofactor.

The enzyme catalyses 2-C-methyl-D-erythritol 4-phosphate + NADP(+) = 1-deoxy-D-xylulose 5-phosphate + NADPH + H(+). The protein operates within isoprenoid biosynthesis; isopentenyl diphosphate biosynthesis via DXP pathway; isopentenyl diphosphate from 1-deoxy-D-xylulose 5-phosphate: step 1/6. Catalyzes the NADPH-dependent rearrangement and reduction of 1-deoxy-D-xylulose-5-phosphate (DXP) to 2-C-methyl-D-erythritol 4-phosphate (MEP). This is 1-deoxy-D-xylulose 5-phosphate reductoisomerase from Streptomyces avermitilis (strain ATCC 31267 / DSM 46492 / JCM 5070 / NBRC 14893 / NCIMB 12804 / NRRL 8165 / MA-4680).